We begin with the raw amino-acid sequence, 102 residues long: uncharacterized protein (102 aa).

This is an uncharacterized protein from Ictaluridae (bullhead catfishes).